Consider the following 171-residue polypeptide: uncharacterized protein (171 aa).

Residues 3–171 (KKVAIILANE…FNREIVKQLQ (169 aa)) form the PfpI endopeptidase domain.

Belongs to the peptidase C56 family.

This is an uncharacterized protein from Staphylococcus aureus (strain MRSA252).